An 86-amino-acid chain; its full sequence is Large ribosomal subunit protein uL23 (86 aa).

This sequence belongs to the universal ribosomal protein uL23 family. In terms of assembly, part of the 50S ribosomal subunit. Contacts protein L29.

In terms of biological role, binds to 23S rRNA. One of the proteins that surrounds the polypeptide exit tunnel on the outside of the ribosome. The polypeptide is Large ribosomal subunit protein uL23 (Caldivirga maquilingensis (strain ATCC 700844 / DSM 13496 / JCM 10307 / IC-167)).